The following is a 340-amino-acid chain: Cytosolic Fe-S cluster assembly factor NBP35 (340 aa).

Positions 1–41 (MPSLVDPVANKTDEGNNRTDLKAPEPEHCPGTESEEAGKAD) are disordered. Residues 11-30 (KTDEGNNRTDLKAPEPEHCP) show a composition bias toward basic and acidic residues. Residues cysteine 29, cysteine 43, cysteine 46, and cysteine 52 each contribute to the [4Fe-4S] cluster site. An ATP-binding site is contributed by 82-89 (GKGGVGKS). Cysteine 255 and cysteine 258 together coordinate [4Fe-4S] cluster.

Belongs to the Mrp/NBP35 ATP-binding proteins family. NUBP1/NBP35 subfamily. As to quaternary structure, heterotetramer of 2 NBP35 and 2 CFD1 chains. It depends on [4Fe-4S] cluster as a cofactor.

It localises to the cytoplasm. Its subcellular location is the nucleus. Component of the cytosolic iron-sulfur (Fe/S) protein assembly (CIA) machinery. Required for maturation of extramitochondrial Fe-S proteins. The NBP35-CFD1 heterotetramer forms a Fe-S scaffold complex, mediating the de novo assembly of an Fe-S cluster and its transfer to target apoproteins. Required for biogenesis and export of both ribosomal subunits, which may reflect a role in assembly of the Fe/S clusters in RLI1, a protein which performs rRNA processing and ribosome export. This Yarrowia lipolytica (strain CLIB 122 / E 150) (Yeast) protein is Cytosolic Fe-S cluster assembly factor NBP35.